Consider the following 162-residue polypeptide: UPF0114 protein Pput_0713 (162 aa).

Helical transmembrane passes span 15–35 (LLAP…LKFF), 53–73 (LILV…LVMV), 109–126 (VAAS…RVFM), and 136–156 (LMWY…MGYL).

It belongs to the UPF0114 family.

It localises to the cell membrane. This chain is UPF0114 protein Pput_0713, found in Pseudomonas putida (strain ATCC 700007 / DSM 6899 / JCM 31910 / BCRC 17059 / LMG 24140 / F1).